The primary structure comprises 329 residues: GMP reductase (329 aa).

Cysteine 178 (thioimidate intermediate) is an active-site residue. Residue 207-230 (VIADGGIRTHGDIAKSIRMGATMV) coordinates NADP(+).

Belongs to the IMPDH/GMPR family. GuaC type 2 subfamily.

It catalyses the reaction IMP + NH4(+) + NADP(+) = GMP + NADPH + 2 H(+). Its function is as follows. Catalyzes the irreversible NADPH-dependent deamination of GMP to IMP. It functions in the conversion of nucleobase, nucleoside and nucleotide derivatives of G to A nucleotides, and in maintaining the intracellular balance of A and G nucleotides. This Lactococcus lactis subsp. cremoris (strain SK11) protein is GMP reductase.